Consider the following 257-residue polypeptide: Imidazole glycerol phosphate synthase subunit HisF (257 aa).

Residues Asp11 and Asp130 contribute to the active site.

This sequence belongs to the HisA/HisF family. In terms of assembly, heterodimer of HisH and HisF.

The protein localises to the cytoplasm. It catalyses the reaction 5-[(5-phospho-1-deoxy-D-ribulos-1-ylimino)methylamino]-1-(5-phospho-beta-D-ribosyl)imidazole-4-carboxamide + L-glutamine = D-erythro-1-(imidazol-4-yl)glycerol 3-phosphate + 5-amino-1-(5-phospho-beta-D-ribosyl)imidazole-4-carboxamide + L-glutamate + H(+). Its pathway is amino-acid biosynthesis; L-histidine biosynthesis; L-histidine from 5-phospho-alpha-D-ribose 1-diphosphate: step 5/9. IGPS catalyzes the conversion of PRFAR and glutamine to IGP, AICAR and glutamate. The HisF subunit catalyzes the cyclization activity that produces IGP and AICAR from PRFAR using the ammonia provided by the HisH subunit. The chain is Imidazole glycerol phosphate synthase subunit HisF from Photobacterium profundum (strain SS9).